Consider the following 288-residue polypeptide: Serine/threonine-protein phosphatase PGAM5, mitochondrial (288 aa).

Topologically, residues Met-1–Ala-6 are mitochondrial matrix. Residues Leu-7 to Gly-29 traverse the membrane as a helical segment. Residues Lys-30–Ser-288 are Mitochondrial intermembrane-facing. The interaction with KEAP1 stretch occupies residues Asn-76–Glu-81. Phosphoserine is present on Ser-86. An N6-acetyllysine mark is found at Lys-115, Lys-143, and Lys-190.

This sequence belongs to the phosphoglycerate mutase family. BPG-dependent PGAM subfamily. In terms of assembly, dimer. Forms a ternary complex with NFE2L2 and KEAP1. Interacts with BCL2L1 and MAP3K5. Upon TNF-induced necrosis, forms in complex with RIPK1, RIPK3 and MLKL; the formation of this complex leads to PGAM5 phosphorylation. Isoform 2, but not isoform 1, interacts with DNM1L; this interaction leads to DNM1L dephosphorylation and activation and eventually to mitochondria fragmentation. Phosphorylated by the RIPK1/RIPK3 complex under necrotic conditions. This phosphorylation increases PGAM5 phosphatase activity. Post-translationally, proteolytically cleaved by PARL in response to loss of mitochondrial membrane potential.

The protein localises to the mitochondrion outer membrane. It is found in the mitochondrion inner membrane. The enzyme catalyses O-phospho-L-seryl-[protein] + H2O = L-seryl-[protein] + phosphate. It catalyses the reaction O-phospho-L-threonyl-[protein] + H2O = L-threonyl-[protein] + phosphate. Functionally, mitochondrial serine/threonine phosphatase that dephosphorylates various substrates and thus plays a role in different biological processes including cellular senescence or mitophagy. Modulates cellular senescence by regulating mitochondrial dynamics. Mechanistically, participates in mitochondrial fission through dephosphorylating DNM1L/DRP1. Additionally, dephosphorylates MFN2 in a stress-sensitive manner and consequently protects it from ubiquitination and degradation to promote mitochondrial network formation. Regulates mitophagy independent of PARKIN by interacting with and dephosphorylating FUNDC1, which interacts with LC3. Regulates anti-oxidative response by forming a tertiary complex with KEAP1 and NRF2. Regulates necroptosis by acting as a RIPK3 target and recruiting the RIPK1-RIPK3-MLKL necrosis 'attack' complex to mitochondria. The sequence is that of Serine/threonine-protein phosphatase PGAM5, mitochondrial (Pgam5) from Rattus norvegicus (Rat).